A 124-amino-acid polypeptide reads, in one-letter code: Small ribosomal subunit protein uS12 (124 aa).

3-methylthioaspartic acid is present on Asp-89. The interval 105-124 (QGVKNRKQARSRYGAKKEKS) is disordered. Basic residues predominate over residues 108-118 (KNRKQARSRYG).

The protein belongs to the universal ribosomal protein uS12 family. In terms of assembly, part of the 30S ribosomal subunit. Contacts proteins S8 and S17. May interact with IF1 in the 30S initiation complex.

Functionally, with S4 and S5 plays an important role in translational accuracy. Its function is as follows. Interacts with and stabilizes bases of the 16S rRNA that are involved in tRNA selection in the A site and with the mRNA backbone. Located at the interface of the 30S and 50S subunits, it traverses the body of the 30S subunit contacting proteins on the other side and probably holding the rRNA structure together. The combined cluster of proteins S8, S12 and S17 appears to hold together the shoulder and platform of the 30S subunit. The chain is Small ribosomal subunit protein uS12 from Mycobacterium sp. (strain JLS).